Reading from the N-terminus, the 243-residue chain is Small ribosomal subunit protein uS3 (243 aa).

The 72-residue stretch at Ile39–Glu110 folds into the KH type-2 domain. Positions Gln216–Lys243 are disordered. Basic and acidic residues predominate over residues Gln233–Lys243.

It belongs to the universal ribosomal protein uS3 family. Part of the 30S ribosomal subunit. Forms a tight complex with proteins S10 and S14.

Its function is as follows. Binds the lower part of the 30S subunit head. Binds mRNA in the 70S ribosome, positioning it for translation. The protein is Small ribosomal subunit protein uS3 of Prochlorococcus marinus (strain SARG / CCMP1375 / SS120).